Here is a 266-residue protein sequence, read N- to C-terminus: Putative pyruvate, phosphate dikinase regulatory protein (266 aa).

Residue 149 to 156 (GVSRTSKT) coordinates ADP.

The protein belongs to the pyruvate, phosphate/water dikinase regulatory protein family. PDRP subfamily.

The catalysed reaction is N(tele)-phospho-L-histidyl/L-threonyl-[pyruvate, phosphate dikinase] + ADP = N(tele)-phospho-L-histidyl/O-phospho-L-threonyl-[pyruvate, phosphate dikinase] + AMP + H(+). It catalyses the reaction N(tele)-phospho-L-histidyl/O-phospho-L-threonyl-[pyruvate, phosphate dikinase] + phosphate + H(+) = N(tele)-phospho-L-histidyl/L-threonyl-[pyruvate, phosphate dikinase] + diphosphate. Bifunctional serine/threonine kinase and phosphorylase involved in the regulation of the pyruvate, phosphate dikinase (PPDK) by catalyzing its phosphorylation/dephosphorylation. The chain is Putative pyruvate, phosphate dikinase regulatory protein from Geobacillus sp. (strain WCH70).